Consider the following 110-residue polypeptide: Large ribosomal subunit protein uL22 (110 aa).

It belongs to the universal ribosomal protein uL22 family. As to quaternary structure, part of the 50S ribosomal subunit.

Its function is as follows. This protein binds specifically to 23S rRNA; its binding is stimulated by other ribosomal proteins, e.g. L4, L17, and L20. It is important during the early stages of 50S assembly. It makes multiple contacts with different domains of the 23S rRNA in the assembled 50S subunit and ribosome. Functionally, the globular domain of the protein is located near the polypeptide exit tunnel on the outside of the subunit, while an extended beta-hairpin is found that lines the wall of the exit tunnel in the center of the 70S ribosome. This is Large ribosomal subunit protein uL22 from Colwellia psychrerythraea (strain 34H / ATCC BAA-681) (Vibrio psychroerythus).